A 380-amino-acid polypeptide reads, in one-letter code: Cytochrome b (380 aa).

The next 4 helical transmembrane spans lie at 34-54 (FGSL…LLAA), 78-99 (WLIR…YLHI), 114-134 (WNTG…GYVL), and 179-199 (FFTL…IHLT). Positions 84 and 98 each coordinate heme b. Heme b contacts are provided by His-183 and His-197. His-202 serves as a coordination point for a ubiquinone. The next 4 membrane-spanning stretches (helical) occupy residues 227–247 (LKDI…ALFS), 289–309 (LGGV…PLLH), 321–341 (FSQL…WVGS), and 348–368 (FIII…ILFP).

This sequence belongs to the cytochrome b family. The cytochrome bc1 complex contains 11 subunits: 3 respiratory subunits (MT-CYB, CYC1 and UQCRFS1), 2 core proteins (UQCRC1 and UQCRC2) and 6 low-molecular weight proteins (UQCRH/QCR6, UQCRB/QCR7, UQCRQ/QCR8, UQCR10/QCR9, UQCR11/QCR10 and a cleavage product of UQCRFS1). This cytochrome bc1 complex then forms a dimer. Requires heme b as cofactor.

It is found in the mitochondrion inner membrane. Its function is as follows. Component of the ubiquinol-cytochrome c reductase complex (complex III or cytochrome b-c1 complex) that is part of the mitochondrial respiratory chain. The b-c1 complex mediates electron transfer from ubiquinol to cytochrome c. Contributes to the generation of a proton gradient across the mitochondrial membrane that is then used for ATP synthesis. This is Cytochrome b (MT-CYB) from Antigone antigone (Sarus crane).